The sequence spans 136 residues: Heavy metal-associated isoprenylated plant protein 19 (136 aa).

The HMA domain maps to 13 to 77 (YMDVEFNVSM…LKKKTGKRVK (65 aa)). Residues C24 and C27 each contribute to the a metal cation site. C133 is subject to Cysteine methyl ester. C133 is lipidated: S-farnesyl cysteine. Positions 134–136 (SIS) are cleaved as a propeptide — removed in mature form.

This sequence belongs to the HIPP family.

In terms of biological role, heavy-metal-binding protein. The chain is Heavy metal-associated isoprenylated plant protein 19 from Arabidopsis thaliana (Mouse-ear cress).